A 232-amino-acid polypeptide reads, in one-letter code: Vacuolar iron transporter homolog 1 (232 aa).

Topologically, residues 1–59 (MAIDLGCHVGCASPETKQEETADPTAAPVVVDDVEAAAGGRRPGDGGGVNYVARAQWLR) are cytoplasmic. The chain crosses the membrane as a helical span at residues 60-80 (AAVLGANDGLVSVASLMVGVG). Topologically, residues 81 to 89 (AANGTRRAM) are vacuolar. Residues 90 to 110 (LVSGLAGLVAGACSMAIGEFV) form a helical membrane-spanning segment. Residues 111–148 (SVYAQCDIQAAQIERARGGKDADGGEEEEELPSPTMAA) lie on the Cytoplasmic side of the membrane. The chain crosses the membrane as a helical span at residues 149–169 (VASALSFAAGAALPLLAGGFV). The Vacuolar segment spans residues 170–175 (RPWAAR). The helical transmembrane segment at 176–196 (VAAVCAASSLGLAGFGVASAY) threads the bilayer. The Cytoplasmic portion of the chain corresponds to 197 to 208 (LGGAGVARSGVR). The helical transmembrane segment at 209-229 (MLVGGWLAMAVTYGVLKLFGM) threads the bilayer. The Vacuolar portion of the chain corresponds to 230 to 232 (HGV).

Belongs to the CCC1 family.

It is found in the vacuole membrane. The catalysed reaction is Fe(2+)(in) = Fe(2+)(out). Its function is as follows. Probable vacuolar iron transporter that may be involved in the regulation of iron distribution throughout the plant. The polypeptide is Vacuolar iron transporter homolog 1 (Oryza sativa subsp. japonica (Rice)).